The sequence spans 207 residues: MPKINILNQQGDFVSEKVLATTVFDIKPNQQVLYDVVNAQRAAMRQGTHATKTRALVAGGGKKPWRQKGTGRARHGSIRSPLWRGGGVTFGPSPRDYSVKVNQKVRSLALKSALSLQAKNNQLVVVDNINLATHKTKDFQQMLQKLNITSKSLIVVTQMTEQLALASRNLSYITLETASHASVYQILNCKQLVLTAAAVNYFEEVLK.

The disordered stretch occupies residues 57–78; it reads VAGGGKKPWRQKGTGRARHGSI. Positions 63-77 are enriched in basic residues; it reads KPWRQKGTGRARHGS.

The protein belongs to the universal ribosomal protein uL4 family. Part of the 50S ribosomal subunit.

Its function is as follows. One of the primary rRNA binding proteins, this protein initially binds near the 5'-end of the 23S rRNA. It is important during the early stages of 50S assembly. It makes multiple contacts with different domains of the 23S rRNA in the assembled 50S subunit and ribosome. Forms part of the polypeptide exit tunnel. This chain is Large ribosomal subunit protein uL4, found in Onion yellows phytoplasma (strain OY-M).